A 162-amino-acid chain; its full sequence is Phosphopantetheine adenylyltransferase (162 aa).

Serine 9 serves as a coordination point for substrate. ATP-binding positions include 9–10 (SF) and histidine 17. Substrate is bound by residues lysine 41, leucine 73, and lysine 87. Residues 88-90 (GLR), glutamate 98, and 123-129 (CSFLSSS) each bind ATP.

Belongs to the bacterial CoaD family. In terms of assembly, homohexamer. Requires Mg(2+) as cofactor.

It localises to the cytoplasm. It catalyses the reaction (R)-4'-phosphopantetheine + ATP + H(+) = 3'-dephospho-CoA + diphosphate. It participates in cofactor biosynthesis; coenzyme A biosynthesis; CoA from (R)-pantothenate: step 4/5. Its function is as follows. Reversibly transfers an adenylyl group from ATP to 4'-phosphopantetheine, yielding dephospho-CoA (dPCoA) and pyrophosphate. The protein is Phosphopantetheine adenylyltransferase of Natranaerobius thermophilus (strain ATCC BAA-1301 / DSM 18059 / JW/NM-WN-LF).